Reading from the N-terminus, the 488-residue chain is pH-response regulator protein palC (488 aa).

A BRO1 domain is found at 2-430 (PPYLYRLPTT…TVAFQPVPPV (429 aa)). The disordered stretch occupies residues 449 to 488 (PPPSKFSPSRIGHLNEEQGNDSPELGETEDTSYAGKGNYF).

Belongs to the palC family.

Functionally, required for the proteolytic cleavage of the transcription factor RIM101 in response to alkaline ambient pH. This chain is pH-response regulator protein palC, found in Cryptococcus neoformans var. neoformans serotype D (strain B-3501A) (Filobasidiella neoformans).